Here is a 365-residue protein sequence, read N- to C-terminus: Class E basic helix-loop-helix protein 22 (365 aa).

Disordered stretches follow at residues 34–93, 134–156, and 188–225; these read AFRS…GGGG, GRGS…DGRC, and HLHG…KEQK. Residues 82–93 show a composition bias toward gly residues; it reads GGGGAGGGGGGG. Residues 191-216 are compositionally biased toward gly residues; the sequence is GGAGLPPGGSTGSGGGGSGGGGGGGS. The region spanning 226 to 280 is the bHLH domain; that stretch reads ALRLNINARERRRMHDLNDALDELRAVIPYAHSPSVRKLSKIATLLLAKNYILMQ.

As to quaternary structure, heterodimer with other bHLH proteins, like TCF3/E47. As to expression, kidney, lung, brain and pancreas (insulinoma).

It is found in the nucleus. Its function is as follows. Inhibits DNA binding of TCF3/E47 homodimers and TCF3 (E47)/NEUROD1 heterodimers and acts as a strong repressor of Neurod1 and Myod-responsive genes, probably by heterodimerization with class a basic helix-loop-helix factors. Despite the presence of an intact basic domain, does not bind to DNA. The polypeptide is Class E basic helix-loop-helix protein 22 (BHLHE22) (Mesocricetus auratus (Golden hamster)).